Here is a 585-residue protein sequence, read N- to C-terminus: Urease subunit alpha (585 aa).

One can recognise a Urease domain in the interval 132–585 (GGIDTHIHFI…LPMAQRYFLF (454 aa)). Residues histidine 137, histidine 139, and lysine 220 each contribute to the Ni(2+) site. Lysine 220 carries the N6-carboxylysine modification. A substrate-binding site is contributed by histidine 222. Positions 249 and 275 each coordinate Ni(2+). The active-site Proton donor is histidine 323. Aspartate 363 provides a ligand contact to Ni(2+).

This sequence belongs to the metallo-dependent hydrolases superfamily. Urease alpha subunit family. As to quaternary structure, heterotrimer of UreA (gamma), UreB (beta) and UreC (alpha) subunits. Three heterotrimers associate to form the active enzyme. It depends on Ni cation as a cofactor. In terms of processing, carboxylation allows a single lysine to coordinate two nickel ions.

The protein localises to the cytoplasm. It catalyses the reaction urea + 2 H2O + H(+) = hydrogencarbonate + 2 NH4(+). It functions in the pathway nitrogen metabolism; urea degradation; CO(2) and NH(3) from urea (urease route): step 1/1. In Pseudarthrobacter chlorophenolicus (strain ATCC 700700 / DSM 12829 / CIP 107037 / JCM 12360 / KCTC 9906 / NCIMB 13794 / A6) (Arthrobacter chlorophenolicus), this protein is Urease subunit alpha.